The sequence spans 212 residues: Peptide methionine sulfoxide reductase MsrA (212 aa).

The active site involves C52.

It belongs to the MsrA Met sulfoxide reductase family.

The enzyme catalyses L-methionyl-[protein] + [thioredoxin]-disulfide + H2O = L-methionyl-(S)-S-oxide-[protein] + [thioredoxin]-dithiol. It catalyses the reaction [thioredoxin]-disulfide + L-methionine + H2O = L-methionine (S)-S-oxide + [thioredoxin]-dithiol. Has an important function as a repair enzyme for proteins that have been inactivated by oxidation. Catalyzes the reversible oxidation-reduction of methionine sulfoxide in proteins to methionine. This is Peptide methionine sulfoxide reductase MsrA from Salmonella newport (strain SL254).